Consider the following 419-residue polypeptide: Serine hydroxymethyltransferase (419 aa).

(6S)-5,6,7,8-tetrahydrofolate contacts are provided by residues leucine 121 and 125–127 (GHL). Lysine 230 carries the N6-(pyridoxal phosphate)lysine modification. Residues glutamate 246 and 355–357 (SPF) contribute to the (6S)-5,6,7,8-tetrahydrofolate site.

The protein belongs to the SHMT family. In terms of assembly, homodimer. It depends on pyridoxal 5'-phosphate as a cofactor.

Its subcellular location is the cytoplasm. It catalyses the reaction (6R)-5,10-methylene-5,6,7,8-tetrahydrofolate + glycine + H2O = (6S)-5,6,7,8-tetrahydrofolate + L-serine. The protein operates within one-carbon metabolism; tetrahydrofolate interconversion. It participates in amino-acid biosynthesis; glycine biosynthesis; glycine from L-serine: step 1/1. In terms of biological role, catalyzes the reversible interconversion of serine and glycine with tetrahydrofolate (THF) serving as the one-carbon carrier. This reaction serves as the major source of one-carbon groups required for the biosynthesis of purines, thymidylate, methionine, and other important biomolecules. Also exhibits THF-independent aldolase activity toward beta-hydroxyamino acids, producing glycine and aldehydes, via a retro-aldol mechanism. This chain is Serine hydroxymethyltransferase, found in Streptococcus suis (strain 98HAH33).